Consider the following 303-residue polypeptide: Nucleotide-binding protein SAR0820 (303 aa).

Residue 18–25 (GLSGAGKS) participates in ATP binding. 69 to 72 (DLRG) is a binding site for GTP.

This sequence belongs to the RapZ-like family.

Its function is as follows. Displays ATPase and GTPase activities. This Staphylococcus aureus (strain MRSA252) protein is Nucleotide-binding protein SAR0820.